The sequence spans 206 residues: Ribosomal RNA large subunit methyltransferase E (206 aa).

Residues Gly61, Trp63, Asp81, Asp97, and Asp122 each contribute to the S-adenosyl-L-methionine site. Lys162 (proton acceptor) is an active-site residue.

It belongs to the class I-like SAM-binding methyltransferase superfamily. RNA methyltransferase RlmE family.

It is found in the cytoplasm. It catalyses the reaction uridine(2552) in 23S rRNA + S-adenosyl-L-methionine = 2'-O-methyluridine(2552) in 23S rRNA + S-adenosyl-L-homocysteine + H(+). Its function is as follows. Specifically methylates the uridine in position 2552 of 23S rRNA at the 2'-O position of the ribose in the fully assembled 50S ribosomal subunit. This is Ribosomal RNA large subunit methyltransferase E from Neisseria meningitidis serogroup C (strain 053442).